We begin with the raw amino-acid sequence, 595 residues long: Pentatricopeptide repeat-containing protein At4g21065 (595 aa).

9 PPR repeats span residues 84–118, 120–154, 155–185, 186–220, 221–255, 256–290, 291–317, 323–353, and 359–389; these read NVFI…GLVE, DTHT…GFGS, LIYV…MPEK, DLVA…GIKP, DGFT…GLTR, NLHS…NSVS, WTSL…MEST, CEIT…MREE, and RIEH…MPMQ. A type E motif region spans residues 394-469; sequence IWRTLLGACT…VPGHSLVEVG (76 aa). The type E(+) motif stretch occupies residues 470–500; that stretch reads NRVHEFLMGDKSHPQSDAIYAKLKEMTGRLR. Residues 501–595 form a type DYW motif region; that stretch reads SEGYVPQISN…NGSCSCQDYW (95 aa).

The protein belongs to the PPR family. PCMP-H subfamily.

The chain is Pentatricopeptide repeat-containing protein At4g21065 (PCMP-H28) from Arabidopsis thaliana (Mouse-ear cress).